The sequence spans 269 residues: Putative hydro-lyase M446_2125 (269 aa).

Belongs to the D-glutamate cyclase family.

The sequence is that of Putative hydro-lyase M446_2125 from Methylobacterium sp. (strain 4-46).